A 273-amino-acid polypeptide reads, in one-letter code: Zinc finger protein 80 (273 aa).

2 C2H2-type zinc fingers span residues 49-71 and 77-99; these read YKCK…QQIH and YECQ…MRIH. The C2H2-type 3; atypical zinc finger occupies 105-127; sequence CKCVECGKVFNRRSHLLCYRQIH. 4 C2H2-type zinc fingers span residues 133–155, 161–183, 189–211, and 217–239; these read YECS…RVTH, FGCK…MKIH, CKCS…SMTH, and YECK…TRSH.

It belongs to the krueppel C2H2-type zinc-finger protein family.

Its subcellular location is the nucleus. In terms of biological role, may be involved in transcriptional regulation. This chain is Zinc finger protein 80 (ZNF80), found in Homo sapiens (Human).